Reading from the N-terminus, the 200-residue chain is Regulator of G-protein signaling 16 (200 aa).

Residues C2 and C12 are each lipidated (S-palmitoyl cysteine). The RGS domain maps to 65–181 (SFDLLLSSKN…LKSPAYRDLA (117 aa)). Phosphotyrosine occurs at positions 168 and 177.

In terms of assembly, interacts with GNAI1 and GNAQ. Interacts with GNAI3, GNAI3 and GNAO1. As to quaternary structure, (Microbial infection) Interacts with porcine circovirus 2 ORF3 protein. In terms of processing, palmitoylated on Cys-2 and/or Cys-12. Post-translationally, phosphorylated. Phosphorylation at Tyr-168 by EGFR enhances GTPase accelerating (GAP) activity toward GNAI1.

The protein localises to the membrane. Its function is as follows. Regulates G protein-coupled receptor signaling cascades. Inhibits signal transduction by increasing the GTPase activity of G protein alpha subunits, thereby driving them into their inactive GDP-bound form. Plays an important role in the phototransduction cascade by regulating the lifetime and effective concentration of activated transducin alpha. May regulate extra and intracellular mitogenic signals. (Microbial infection) Gets inactivated and/or degraded by porcine circovirus 2 ORF3 protein, leading to enhanced expression of IL-6 and IL-8 in infected lymphocytes. This would explain chronic inflammatory response of PCV2 infected pigs. The chain is Regulator of G-protein signaling 16 (RGS16) from Sus scrofa (Pig).